The following is a 384-amino-acid chain: Putative pectate lyase 2 (384 aa).

Positions 1 to 23 (MASLFLTIISLLFAAFSSSVVEA) are cleaved as a signal peptide. Residues D182, D206, and D210 each contribute to the Ca(2+) site. The active site involves R262.

The protein belongs to the polysaccharide lyase 1 family. Ca(2+) is required as a cofactor.

It carries out the reaction Eliminative cleavage of (1-&gt;4)-alpha-D-galacturonan to give oligosaccharides with 4-deoxy-alpha-D-galact-4-enuronosyl groups at their non-reducing ends.. Its pathway is glycan metabolism; pectin degradation; 2-dehydro-3-deoxy-D-gluconate from pectin: step 2/5. The sequence is that of Putative pectate lyase 2 from Arabidopsis thaliana (Mouse-ear cress).